Consider the following 417-residue polypeptide: Serine hydroxymethyltransferase 2 (417 aa).

(6S)-5,6,7,8-tetrahydrofolate is bound by residues leucine 121 and 125-127; that span reads GHL. Lysine 230 bears the N6-(pyridoxal phosphate)lysine mark. 355–357 serves as a coordination point for (6S)-5,6,7,8-tetrahydrofolate; it reads SPF.

Belongs to the SHMT family. As to quaternary structure, homodimer. The cofactor is pyridoxal 5'-phosphate.

The protein resides in the cytoplasm. It catalyses the reaction (6R)-5,10-methylene-5,6,7,8-tetrahydrofolate + glycine + H2O = (6S)-5,6,7,8-tetrahydrofolate + L-serine. Its pathway is one-carbon metabolism; tetrahydrofolate interconversion. The protein operates within amino-acid biosynthesis; glycine biosynthesis; glycine from L-serine: step 1/1. Functionally, catalyzes the reversible interconversion of serine and glycine with tetrahydrofolate (THF) serving as the one-carbon carrier. This reaction serves as the major source of one-carbon groups required for the biosynthesis of purines, thymidylate, methionine, and other important biomolecules. Also exhibits THF-independent aldolase activity toward beta-hydroxyamino acids, producing glycine and aldehydes, via a retro-aldol mechanism. This chain is Serine hydroxymethyltransferase 2, found in Pseudomonas syringae pv. syringae (strain B728a).